We begin with the raw amino-acid sequence, 191 residues long: Peptidyl-tRNA hydrolase (191 aa).

Tyr17 contacts tRNA. The active-site Proton acceptor is His22. TRNA contacts are provided by Tyr68, Asn70, and Asn116.

The protein belongs to the PTH family. As to quaternary structure, monomer.

The protein localises to the cytoplasm. The enzyme catalyses an N-acyl-L-alpha-aminoacyl-tRNA + H2O = an N-acyl-L-amino acid + a tRNA + H(+). Functionally, hydrolyzes ribosome-free peptidyl-tRNAs (with 1 or more amino acids incorporated), which drop off the ribosome during protein synthesis, or as a result of ribosome stalling. In terms of biological role, catalyzes the release of premature peptidyl moieties from peptidyl-tRNA molecules trapped in stalled 50S ribosomal subunits, and thus maintains levels of free tRNAs and 50S ribosomes. The polypeptide is Peptidyl-tRNA hydrolase (Mycobacterium tuberculosis (strain ATCC 25177 / H37Ra)).